The primary structure comprises 77 residues: uncharacterized protein (77 aa).

Residues 49-71 (LVIASLILAIILLGILYYISYQM) traverse the membrane as a helical segment.

Its subcellular location is the membrane. This is an uncharacterized protein from Archaeoglobus fulgidus (strain ATCC 49558 / DSM 4304 / JCM 9628 / NBRC 100126 / VC-16).